The sequence spans 541 residues: MNALVDQLKSTAAASKATDIRAAFAADPKRFSRFSASFDDLLMDYSKTAVNDEILTLLEKLATEGGVAAKREEMFSGVAINFTEDRAVLHTALRNRSNTPVLVDGKDVMPDVNGVLAAMGKFADGIRSGTLKGATGKAITDVINIGIGGSDLGPVMATLALAPFHDGPRSYFVSNIDGAHIADILKLVSPETTLFIIASKTFTTIETMTNAQTARNFIAKALGEAAVQHHFAAVSTALDKVAAFGIDSARVFGFWDWVGGRYSIWSAIGLPLMIAVGPENFGKFLDGAHAMDNHFRKAPFKENLPMLLGLIGFYHRNVLGYTTRAILPYDQRLSRFPAYLQQLDMESNGKGVTIDGTPVEGNSGPVVWGEPGTNGQHAFYQLIHQGTSIIPAEFMIAANGFEPDLRHQHELLIANCLAQSEALMKGRTFEEAKAQLTSKGMDDKKADFIAPHRVFTGNRPSITFVYDKLTPFALGRLIALYEHRVFVEGVLFRINSFDQWGVELGKELATGLLPVVEGKESAAGHDSSTQGLVAALSKLEK.

Residue E346 is the Proton donor of the active site. Residues H377 and K506 contribute to the active site.

This sequence belongs to the GPI family.

Its subcellular location is the cytoplasm. The enzyme catalyses alpha-D-glucose 6-phosphate = beta-D-fructose 6-phosphate. It functions in the pathway carbohydrate biosynthesis; gluconeogenesis. The protein operates within carbohydrate degradation; glycolysis; D-glyceraldehyde 3-phosphate and glycerone phosphate from D-glucose: step 2/4. Functionally, catalyzes the reversible isomerization of glucose-6-phosphate to fructose-6-phosphate. In Rhizobium rhizogenes (strain K84 / ATCC BAA-868) (Agrobacterium radiobacter), this protein is Glucose-6-phosphate isomerase.